A 502-amino-acid polypeptide reads, in one-letter code: RNA-splicing ligase RtcB homolog 2 (502 aa).

Mn(2+) contacts are provided by aspartate 120, cysteine 123, histidine 228, histidine 260, and histidine 354. GMP is bound at residue 227–231 (NHYAE). Residues 354–355 (HN), 403–406 (GGSM), serine 410, and 429–432 (HGAG) contribute to the GMP site. The active-site GMP-histidine intermediate is histidine 429.

The protein belongs to the RtcB family. As to quaternary structure, catalytic component of the tRNA-splicing ligase complex. It depends on Mn(2+) as a cofactor.

It carries out the reaction a 3'-end 3'-phospho-ribonucleotide-RNA + a 5'-end dephospho-ribonucleoside-RNA + GTP = a ribonucleotidyl-ribonucleotide-RNA + GMP + diphosphate. It catalyses the reaction a 3'-end 2',3'-cyclophospho-ribonucleotide-RNA + a 5'-end dephospho-ribonucleoside-RNA + GTP + H2O = a ribonucleotidyl-ribonucleotide-RNA + GMP + diphosphate + H(+). Catalytic subunit of the tRNA-splicing ligase complex that acts by directly joining spliced tRNA halves to mature-sized tRNAs by incorporating the precursor-derived splice junction phosphate into the mature tRNA as a canonical 3',5'-phosphodiester. May act as an RNA ligase with broad substrate specificity, and may function toward other RNAs. The polypeptide is RNA-splicing ligase RtcB homolog 2 (Culex quinquefasciatus (Southern house mosquito)).